Here is a 380-residue protein sequence, read N- to C-terminus: Cobalt-precorrin-5B C(1)-methyltransferase (380 aa).

The protein belongs to the CbiD family.

The enzyme catalyses Co-precorrin-5B + S-adenosyl-L-methionine = Co-precorrin-6A + S-adenosyl-L-homocysteine. The protein operates within cofactor biosynthesis; adenosylcobalamin biosynthesis; cob(II)yrinate a,c-diamide from sirohydrochlorin (anaerobic route): step 6/10. Its function is as follows. Catalyzes the methylation of C-1 in cobalt-precorrin-5B to form cobalt-precorrin-6A. This Methanosphaera stadtmanae (strain ATCC 43021 / DSM 3091 / JCM 11832 / MCB-3) protein is Cobalt-precorrin-5B C(1)-methyltransferase.